Here is a 397-residue protein sequence, read N- to C-terminus: 3-ketoacyl-CoA thiolase, mitochondrial (397 aa).

The N-terminal 16 residues, 1–16 (MALLRGVFIVAAKRTP), are a transit peptide targeting the mitochondrion; not cleaved. Lysine 25 is subject to N6-acetyllysine; alternate. At lysine 25 the chain carries N6-succinyllysine; alternate. Lysine 45 bears the N6-succinyllysine mark. Cysteine 92 acts as the Acyl-thioester intermediate in catalysis. Threonine 119 is modified (phosphothreonine). Phosphoserine is present on serine 121. Tyrosine 127 bears the Phosphotyrosine mark. At threonine 136 the chain carries Phosphothreonine. N6-acetyllysine; alternate occurs at positions 137, 143, 158, 171, 191, and 209. Lysine 137, lysine 143, lysine 158, lysine 171, lysine 191, and lysine 209 each carry N6-succinyllysine; alternate. An N6-succinyllysine mark is found at lysine 211, lysine 212, and lysine 214. CoA is bound by residues arginine 224 and threonine 227. Lysine 240 carries the N6-succinyllysine modification. N6-acetyllysine is present on lysine 241. Residue serine 251 coordinates CoA. N6-acetyllysine occurs at positions 269 and 270. Lysine 305 carries the N6-acetyllysine; alternate modification. Lysine 305 is subject to N6-succinyllysine; alternate. Serine 310 is subject to Phosphoserine. Lysine 312 carries the N6-acetyllysine; alternate modification. Lysine 312 bears the N6-succinyllysine; alternate mark. Serine 333 is subject to Phosphoserine. The residue at position 340 (lysine 340) is an N6-acetyllysine. Serine 344 carries the phosphoserine modification. Lysine 375 is subject to N6-acetyllysine. Cysteine 382 serves as the catalytic Proton donor/acceptor.

The protein belongs to the thiolase-like superfamily. Thiolase family. Homotetramer. Interacts with BNIP3. As to expression, expressed in liver, brown adipose tissue and heart (at protein level).

It localises to the mitochondrion. It carries out the reaction an acyl-CoA + acetyl-CoA = a 3-oxoacyl-CoA + CoA. It catalyses the reaction 2 acetyl-CoA = acetoacetyl-CoA + CoA. The catalysed reaction is acetyl-CoA + H2O = acetate + CoA + H(+). The enzyme catalyses propanoyl-CoA + H2O = propanoate + CoA + H(+). It carries out the reaction butanoyl-CoA + H2O = butanoate + CoA + H(+). It catalyses the reaction hexanoyl-CoA + H2O = hexanoate + CoA + H(+). The catalysed reaction is octanoyl-CoA + H2O = octanoate + CoA + H(+). The enzyme catalyses decanoyl-CoA + H2O = decanoate + CoA + H(+). It carries out the reaction dodecanoyl-CoA + H2O = dodecanoate + CoA + H(+). It catalyses the reaction tetradecanoyl-CoA + H2O = tetradecanoate + CoA + H(+). The catalysed reaction is hexadecanoyl-CoA + H2O = hexadecanoate + CoA + H(+). It participates in lipid metabolism; fatty acid beta-oxidation. With respect to regulation, the 3-oxoacetyl-CoA thiolase activity is inhibited by acetyl-CoA while the acetyl-CoA hydrolase activity is inhibited by acetoacetyl-CoA. In the production of energy from fats, this is one of the enzymes that catalyzes the last step of the mitochondrial beta-oxidation pathway, an aerobic process breaking down fatty acids into acetyl-CoA. Using free coenzyme A/CoA, catalyzes the thiolytic cleavage of medium- to long-chain unbranched 3-oxoacyl-CoAs into acetyl-CoA and a fatty acyl-CoA shortened by two carbon atoms. Also catalyzes the condensation of two acetyl-CoA molecules into acetoacetyl-CoA and could be involved in the production of ketone bodies. Also displays hydrolase activity on various fatty acyl-CoAs. Thereby, could be responsible for the production of acetate in a side reaction to beta-oxidation. Abolishes BNIP3-mediated apoptosis and mitochondrial damage. This Rattus norvegicus (Rat) protein is 3-ketoacyl-CoA thiolase, mitochondrial (Acaa2).